The chain runs to 368 residues: Phospho-N-acetylmuramoyl-pentapeptide-transferase (368 aa).

Helical transmembrane passes span 2-22 (IALI…TPLL), 51-71 (TLGG…SALY), 80-100 (PTWA…LGFI), 116-136 (VGGK…LALI), 166-186 (IVAI…WTNA), 193-213 (LDGL…IIAM), 234-254 (PLDL…FLWY), 256-276 (CNPA…GLFA), 277-297 (ALSI…LFVV), and 340-360 (FWIV…GNWV).

This sequence belongs to the glycosyltransferase 4 family. MraY subfamily. Requires Mg(2+) as cofactor.

Its subcellular location is the cell membrane. The enzyme catalyses UDP-N-acetyl-alpha-D-muramoyl-L-alanyl-gamma-D-glutamyl-meso-2,6-diaminopimeloyl-D-alanyl-D-alanine + di-trans,octa-cis-undecaprenyl phosphate = di-trans,octa-cis-undecaprenyl diphospho-N-acetyl-alpha-D-muramoyl-L-alanyl-D-glutamyl-meso-2,6-diaminopimeloyl-D-alanyl-D-alanine + UMP. The protein operates within cell wall biogenesis; peptidoglycan biosynthesis. Functionally, catalyzes the initial step of the lipid cycle reactions in the biosynthesis of the cell wall peptidoglycan: transfers peptidoglycan precursor phospho-MurNAc-pentapeptide from UDP-MurNAc-pentapeptide onto the lipid carrier undecaprenyl phosphate, yielding undecaprenyl-pyrophosphoryl-MurNAc-pentapeptide, known as lipid I. This is Phospho-N-acetylmuramoyl-pentapeptide-transferase from Bifidobacterium animalis subsp. lactis (strain AD011).